The chain runs to 105 residues: NADH-quinone oxidoreductase subunit K (105 aa).

Transmembrane regions (helical) follow at residues 8 to 28, 34 to 54, and 65 to 85; these read LAAYLILGAMLFSIGVVGVFL, IILLMAIELLLLAVNINLVAF, and VFVFFILTVAAAEAAIGLAIL.

It belongs to the complex I subunit 4L family. NDH-1 is composed of 14 different subunits. Subunits NuoA, H, J, K, L, M, N constitute the membrane sector of the complex.

Its subcellular location is the cell inner membrane. It carries out the reaction a quinone + NADH + 5 H(+)(in) = a quinol + NAD(+) + 4 H(+)(out). NDH-1 shuttles electrons from NADH, via FMN and iron-sulfur (Fe-S) centers, to quinones in the respiratory chain. The immediate electron acceptor for the enzyme in this species is believed to be ubiquinone. Couples the redox reaction to proton translocation (for every two electrons transferred, four hydrogen ions are translocated across the cytoplasmic membrane), and thus conserves the redox energy in a proton gradient. This is NADH-quinone oxidoreductase subunit K from Acidithiobacillus ferrooxidans (strain ATCC 23270 / DSM 14882 / CIP 104768 / NCIMB 8455) (Ferrobacillus ferrooxidans (strain ATCC 23270)).